The sequence spans 476 residues: MDMEVDEAISGTSSSRLAPIEEVKPTPKQIKRIAAHSHVKGLGIDTETQEAHYEAAGFVGQAPARTAASIVVDMIRLKCMAGRAVLIAGPPATGKTAIALAMSQELGDGVPFVPLVASEVFSNEVKKTEVLMRSFRRAIGLRVKETKDVYEGEVTELSPVEASDNSGMGKTISHLVLSLKTAKGSKQLKLDPSIYDSILKQRVEVGDVIYIEANSGIVKRVGRCDVYASEFDLEADEFVPMPKGDVRKSKDIVQNVSLHDLDIANARPQGRQGDVSNIVSQLMTPKKTEVTDRLRSEINKVVNEYIESGVAELMPGVLFIDEVHMLDVECFTYLYRALESPMAPVVVFATNRGTTTVRGLGDKAPHGIPPEMLDRLMIIPTMKYNEEDIRKILVHRTEAENVQFEEKAFDLLSKVGAEKSLRYALQLIAPARLCAQTCGREVIEVEDVDRCTKLFMDRGESLKKAEEEMRQPKNKK.

The disordered stretch occupies residues 1–23; it reads MDMEVDEAISGTSSSRLAPIEEV. Residue 89–96 participates in ATP binding; the sequence is GPPATGKT.

This sequence belongs to the RuvB family. Forms homohexameric rings. May form a dodecamer with ruvb-2 made of two stacked hexameric rings. In terms of tissue distribution, expressed in gonadal cells.

The protein resides in the cytoplasm. It is found in the nucleus. The enzyme catalyses ATP + H2O = ADP + phosphate + H(+). Its function is as follows. Possesses single-stranded DNA-stimulated ATPase and ATP dependent DNA helicase (3' to 5') activity suggesting a role in nuclear processes such as recombination and transcription. May participate in several chromatin remodeling complexes that mediate the ATP-dependent exchange of histones and remodel chromatin by shifting nucleosomes. Involvement in these complexes is likely required for transcriptional activation of selected genes and DNA repair in response to DNA damage. Involved in the Ce-Tor signaling pathway whereby it is required for the accumulation and localization of box C/D snoRNP to nucleoli to regulate ribosomal maturation and thus protein synthesis. Antagonizes the transcriptional activity of transcription factor pha-4, to control postembryonic development and adult longevity. Has a role in pharyngeal development. Has a role in gonadal development. The sequence is that of RuvB-like 1 from Caenorhabditis elegans.